A 152-amino-acid polypeptide reads, in one-letter code: 3-dehydroquinate dehydratase (152 aa).

The Proton acceptor role is filled by Tyr-23. The substrate site is built by Asn-74, His-80, and Asp-87. The active-site Proton donor is His-100. Residues Leu-101–Ser-102 and Arg-111 contribute to the substrate site.

It belongs to the type-II 3-dehydroquinase family. In terms of assembly, homododecamer.

The enzyme catalyses 3-dehydroquinate = 3-dehydroshikimate + H2O. It functions in the pathway metabolic intermediate biosynthesis; chorismate biosynthesis; chorismate from D-erythrose 4-phosphate and phosphoenolpyruvate: step 3/7. Functionally, catalyzes a trans-dehydration via an enolate intermediate. The polypeptide is 3-dehydroquinate dehydratase (Clostridium botulinum (strain Langeland / NCTC 10281 / Type F)).